A 248-amino-acid chain; its full sequence is Protein maestro (248 aa).

Residues 1 to 21 (MDQRQRRILGQPLSIPTSQPK) are disordered. One copy of the HEAT repeat lies at 128–163 (SFFIDITLQTRTLLDDENDSLRYSAFVLFGQLAAFA).

Ubiquitous.

Its subcellular location is the nucleus. It localises to the nucleolus. The sequence is that of Protein maestro (MRO) from Homo sapiens (Human).